Consider the following 154-residue polypeptide: MGLSDGEWQLVLNVWGKVEADVPSHGQEVLISLFKGHPETLEKFDKFKHLKSEDEMKASEELKKHGVTVLTALGGILKKKGHHEAELKPLAQSHATKHKIPVKYLEFISDAIVHVLQKKHPGDFGADAQGAMKKALELFRNDMAAKYKELGFQG.

The Globin domain maps to 2-148; that stretch reads GLSDGEWQLV…FRNDMAAKYK (147 aa). S4 bears the Phosphoserine mark. Residue H65 participates in nitrite binding. H65 provides a ligand contact to O2. T68 carries the post-translational modification Phosphothreonine. Residue H94 coordinates heme b.

It belongs to the globin family. As to quaternary structure, monomeric.

It is found in the cytoplasm. Its subcellular location is the sarcoplasm. It catalyses the reaction Fe(III)-heme b-[protein] + nitric oxide + H2O = Fe(II)-heme b-[protein] + nitrite + 2 H(+). The catalysed reaction is H2O2 + AH2 = A + 2 H2O. In terms of biological role, monomeric heme protein which primary function is to store oxygen and facilitate its diffusion within muscle tissues. Reversibly binds oxygen through a pentacoordinated heme iron and enables its timely and efficient release as needed during periods of heightened demand. Depending on the oxidative conditions of tissues and cells, and in addition to its ability to bind oxygen, it also has a nitrite reductase activity whereby it regulates the production of bioactive nitric oxide. Under stress conditions, like hypoxia and anoxia, it also protects cells against reactive oxygen species thanks to its pseudoperoxidase activity. This is Myoglobin (MB) from Aotus trivirgatus (Three-striped night monkey).